The chain runs to 356 residues: Nucleosome assembly protein 1;4 (356 aa).

The stretch at 34–88 forms a coiled coil; that stretch reads VNALKNKLQNLAGQHSDILETLTPQVRKRVDVLRELQSQHDELESHFFEERAALE. The Nuclear export signal signature appears at 55–70; that stretch reads LTPQVRKRVDVLRELQ. Residues 230-235 carry the Nuclear localization signal motif; it reads KKKPKK. The tract at residues 304-356 is disordered; it reads FTGEAAEGDEFEDIEDDDDDDDDDDDEDDEDEEDEDDEEEEKSKKKSSALKVE. A compositionally biased stretch (acidic residues) spans 309-343; sequence AEGDEFEDIEDDDDDDDDDDDEDDEDEEDEDDEEE. Over residues 347–356 the composition is skewed to basic residues; it reads KKKSSALKVE.

It belongs to the nucleosome assembly protein (NAP) family. Can form homomeric and heteromeric protein complexes with NAP1;3. Binds histones H2A and H2B in vivo. Also able to bind histones H1 and H4 in vitro. Interacts with CYCB1;1 and with alpha tubulin.

It localises to the nucleus. The protein resides in the cytoplasm. Its function is as follows. May modulate chromatin structure by regulation of nucleosome assembly/disassembly. Could function together with B-type cyclins in the regulation of microtubule dynamics. This is Nucleosome assembly protein 1;4 (NAP1;4) from Nicotiana tabacum (Common tobacco).